The sequence spans 70 residues: Protein SlyX homolog (70 aa).

The protein belongs to the SlyX family.

This is Protein SlyX homolog from Shewanella pealeana (strain ATCC 700345 / ANG-SQ1).